A 258-amino-acid chain; its full sequence is Imidazole glycerol phosphate synthase subunit HisF (258 aa).

Active-site residues include aspartate 12 and aspartate 131.

It belongs to the HisA/HisF family. As to quaternary structure, heterodimer of HisH and HisF.

Its subcellular location is the cytoplasm. It catalyses the reaction 5-[(5-phospho-1-deoxy-D-ribulos-1-ylimino)methylamino]-1-(5-phospho-beta-D-ribosyl)imidazole-4-carboxamide + L-glutamine = D-erythro-1-(imidazol-4-yl)glycerol 3-phosphate + 5-amino-1-(5-phospho-beta-D-ribosyl)imidazole-4-carboxamide + L-glutamate + H(+). The protein operates within amino-acid biosynthesis; L-histidine biosynthesis; L-histidine from 5-phospho-alpha-D-ribose 1-diphosphate: step 5/9. In terms of biological role, IGPS catalyzes the conversion of PRFAR and glutamine to IGP, AICAR and glutamate. The HisF subunit catalyzes the cyclization activity that produces IGP and AICAR from PRFAR using the ammonia provided by the HisH subunit. The polypeptide is Imidazole glycerol phosphate synthase subunit HisF (Arthrobacter sp. (strain FB24)).